Here is a 55-residue protein sequence, read N- to C-terminus: Large ribosomal subunit protein bL33A (55 aa).

This sequence belongs to the bacterial ribosomal protein bL33 family.

In Mycobacterium sp. (strain KMS), this protein is Large ribosomal subunit protein bL33A.